A 159-amino-acid chain; its full sequence is NAD(P)H-quinone oxidoreductase subunit J, chloroplastic (159 aa).

Belongs to the complex I 30 kDa subunit family. As to quaternary structure, NDH is composed of at least 16 different subunits, 5 of which are encoded in the nucleus.

The protein localises to the plastid. It localises to the chloroplast thylakoid membrane. The enzyme catalyses a plastoquinone + NADH + (n+1) H(+)(in) = a plastoquinol + NAD(+) + n H(+)(out). It carries out the reaction a plastoquinone + NADPH + (n+1) H(+)(in) = a plastoquinol + NADP(+) + n H(+)(out). NDH shuttles electrons from NAD(P)H:plastoquinone, via FMN and iron-sulfur (Fe-S) centers, to quinones in the photosynthetic chain and possibly in a chloroplast respiratory chain. The immediate electron acceptor for the enzyme in this species is believed to be plastoquinone. Couples the redox reaction to proton translocation, and thus conserves the redox energy in a proton gradient. This chain is NAD(P)H-quinone oxidoreductase subunit J, chloroplastic, found in Agrostis stolonifera (Creeping bentgrass).